Consider the following 102-residue polypeptide: Urease subunit beta (102 aa).

It belongs to the urease beta subunit family. In terms of assembly, heterotrimer of UreA (gamma), UreB (beta) and UreC (alpha) subunits. Three heterotrimers associate to form the active enzyme.

The protein localises to the cytoplasm. It carries out the reaction urea + 2 H2O + H(+) = hydrogencarbonate + 2 NH4(+). The protein operates within nitrogen metabolism; urea degradation; CO(2) and NH(3) from urea (urease route): step 1/1. The sequence is that of Urease subunit beta from Acinetobacter baylyi (strain ATCC 33305 / BD413 / ADP1).